The sequence spans 122 residues: Small ribosomal subunit protein bS16 (122 aa).

The tract at residues 87–122 (AQSNPKKALPKKKAQERAAASAAAAEKAAAAAAPEA) is disordered. Residues 103 to 122 (RAAASAAAAEKAAAAAAPEA) are compositionally biased toward low complexity.

This sequence belongs to the bacterial ribosomal protein bS16 family.

The chain is Small ribosomal subunit protein bS16 from Methylocella silvestris (strain DSM 15510 / CIP 108128 / LMG 27833 / NCIMB 13906 / BL2).